A 235-amino-acid chain; its full sequence is Protein MAINTENANCE OF PSII UNDER HIGH LIGHT 1 (235 aa).

The chain crosses the membrane as a helical span at residues 127–147; that stretch reads TAAIVAGIALIAVAAASSILL. The tract at residues 181-235 is disordered; that stretch reads QPSTPSVTEAPPVAELETSLPETPSVAQQETSLPETMASEAQPEASSVPTTSSTS. Polar residues-rich tracts occupy residues 200-214 and 224-235; these read LPET…TSLP and EASSVPTTSSTS.

As to quaternary structure, interacts with psbA, psbB, psbC and psbD.

Its subcellular location is the plastid. The protein resides in the chloroplast thylakoid membrane. In terms of biological role, interacts with photosystem II (PSII) core complexes and participates in the maintenance of normal PSII activity under photoinhibitory stress. May protect against photodamage or stabilize PSII under high-light stress. Participates in the maintainance of proper PSII function under high-light stress by protecting PSII from photooxidative damage. In Arabidopsis thaliana (Mouse-ear cress), this protein is Protein MAINTENANCE OF PSII UNDER HIGH LIGHT 1.